The sequence spans 243 residues: Urease accessory protein UreF (243 aa).

The protein belongs to the UreF family. UreD, UreF and UreG form a complex that acts as a GTP-hydrolysis-dependent molecular chaperone, activating the urease apoprotein by helping to assemble the nickel containing metallocenter of UreC. The UreE protein probably delivers the nickel.

The protein localises to the cytoplasm. Its function is as follows. Required for maturation of urease via the functional incorporation of the urease nickel metallocenter. This Rhodopseudomonas palustris (strain BisB5) protein is Urease accessory protein UreF.